The chain runs to 440 residues: Chromosomal replication initiator protein DnaA (440 aa).

The segment at 1–69 (MKERILQEIK…VKVVLGNDAT (69 aa)) is domain I, interacts with DnaA modulators. A domain II region spans residues 69-96 (TFEITYEAFEPHSSYSEPLVKKRAVLLT). Residues 97–313 (PLNPDYTFEN…GAIIKLLVYK (217 aa)) are domain III, AAA+ region. 4 residues coordinate ATP: G140, G142, K143, and T144. The tract at residues 314–440 (ETTGKEVDLR…GEISKRALSG (127 aa)) is domain IV, binds dsDNA.

This sequence belongs to the DnaA family. Oligomerizes as a right-handed, spiral filament on DNA at oriC.

The protein localises to the cytoplasm. Functionally, plays an essential role in the initiation and regulation of chromosomal replication. ATP-DnaA binds to the origin of replication (oriC) to initiate formation of the DNA replication initiation complex once per cell cycle. Binds the DnaA box (a 9 base pair repeat at the origin) and separates the double-stranded (ds)DNA. Forms a right-handed helical filament on oriC DNA; dsDNA binds to the exterior of the filament while single-stranded (ss)DNA is stabiized in the filament's interior. The ATP-DnaA-oriC complex binds and stabilizes one strand of the AT-rich DNA unwinding element (DUE), permitting loading of DNA polymerase. After initiation quickly degrades to an ADP-DnaA complex that is not apt for DNA replication. Binds acidic phospholipids. This chain is Chromosomal replication initiator protein DnaA, found in Thermotoga petrophila (strain ATCC BAA-488 / DSM 13995 / JCM 10881 / RKU-1).